The primary structure comprises 248 residues: 2,3-bisphosphoglycerate-dependent phosphoglycerate mutase (248 aa).

Residues 8–15 (RHGESAWN), 21–22 (TG), arginine 60, 87–90 (EKHY), lysine 98, 114–115 (RR), and 183–184 (GN) each bind substrate. Catalysis depends on histidine 9, which acts as the Tele-phosphohistidine intermediate. The active-site Proton donor/acceptor is glutamate 87.

This sequence belongs to the phosphoglycerate mutase family. BPG-dependent PGAM subfamily.

The enzyme catalyses (2R)-2-phosphoglycerate = (2R)-3-phosphoglycerate. It functions in the pathway carbohydrate degradation; glycolysis; pyruvate from D-glyceraldehyde 3-phosphate: step 3/5. Catalyzes the interconversion of 2-phosphoglycerate and 3-phosphoglycerate. In Bacteroides fragilis (strain ATCC 25285 / DSM 2151 / CCUG 4856 / JCM 11019 / LMG 10263 / NCTC 9343 / Onslow / VPI 2553 / EN-2), this protein is 2,3-bisphosphoglycerate-dependent phosphoglycerate mutase.